Here is a 401-residue protein sequence, read N- to C-terminus: S-adenosylmethionine synthase (401 aa).

An ATP-binding site is contributed by 137–142 (GEGSGD). Residues 272 to 305 (GTSAEQGDDGSVGRGNRSNGLITPNRSMSMEATS) are disordered. Residues 287–305 (NRSNGLITPNRSMSMEATS) are compositionally biased toward polar residues.

The protein belongs to the AdoMet synthase 2 family. It depends on Mg(2+) as a cofactor.

The enzyme catalyses L-methionine + ATP + H2O = S-adenosyl-L-methionine + phosphate + diphosphate. The protein operates within amino-acid biosynthesis; S-adenosyl-L-methionine biosynthesis; S-adenosyl-L-methionine from L-methionine: step 1/1. Its function is as follows. Catalyzes the formation of S-adenosylmethionine from methionine and ATP. The chain is S-adenosylmethionine synthase from Natronomonas pharaonis (strain ATCC 35678 / DSM 2160 / CIP 103997 / JCM 8858 / NBRC 14720 / NCIMB 2260 / Gabara) (Halobacterium pharaonis).